A 312-amino-acid polypeptide reads, in one-letter code: Ribosomal protein L11 methyltransferase (312 aa).

S-adenosyl-L-methionine-binding residues include threonine 160, glycine 181, aspartate 203, and asparagine 246.

This sequence belongs to the methyltransferase superfamily. PrmA family.

It is found in the cytoplasm. It carries out the reaction L-lysyl-[protein] + 3 S-adenosyl-L-methionine = N(6),N(6),N(6)-trimethyl-L-lysyl-[protein] + 3 S-adenosyl-L-homocysteine + 3 H(+). In terms of biological role, methylates ribosomal protein L11. The chain is Ribosomal protein L11 methyltransferase from Staphylococcus epidermidis (strain ATCC 12228 / FDA PCI 1200).